Consider the following 312-residue polypeptide: tRNA dimethylallyltransferase (312 aa).

17-24 (GPTASGKS) contacts ATP. Position 19-24 (19-24 (TASGKS)) interacts with substrate.

It belongs to the IPP transferase family. Monomer. The cofactor is Mg(2+).

It catalyses the reaction adenosine(37) in tRNA + dimethylallyl diphosphate = N(6)-dimethylallyladenosine(37) in tRNA + diphosphate. Its function is as follows. Catalyzes the transfer of a dimethylallyl group onto the adenine at position 37 in tRNAs that read codons beginning with uridine, leading to the formation of N6-(dimethylallyl)adenosine (i(6)A). This Zymomonas mobilis subsp. mobilis (strain ATCC 31821 / ZM4 / CP4) protein is tRNA dimethylallyltransferase.